We begin with the raw amino-acid sequence, 553 residues long: Glucose-6-phosphate isomerase (553 aa).

The active-site Proton donor is Glu-357. Residues His-388 and Lys-514 contribute to the active site. The disordered stretch occupies residues Ile-524–Gly-553. Residues Leu-541–Gly-553 are compositionally biased toward basic and acidic residues.

The protein belongs to the GPI family.

The protein resides in the cytoplasm. The enzyme catalyses alpha-D-glucose 6-phosphate = beta-D-fructose 6-phosphate. It functions in the pathway carbohydrate biosynthesis; gluconeogenesis. The protein operates within carbohydrate degradation; glycolysis; D-glyceraldehyde 3-phosphate and glycerone phosphate from D-glucose: step 2/4. Its function is as follows. Catalyzes the reversible isomerization of glucose-6-phosphate to fructose-6-phosphate. The protein is Glucose-6-phosphate isomerase of Mycobacterium bovis (strain BCG / Tokyo 172 / ATCC 35737 / TMC 1019).